We begin with the raw amino-acid sequence, 149 residues long: D-aminoacyl-tRNA deacylase (149 aa).

Positions 137–138 (GP) match the Gly-cisPro motif, important for rejection of L-amino acids motif.

This sequence belongs to the DTD family. In terms of assembly, homodimer.

It localises to the cytoplasm. It catalyses the reaction glycyl-tRNA(Ala) + H2O = tRNA(Ala) + glycine + H(+). It carries out the reaction a D-aminoacyl-tRNA + H2O = a tRNA + a D-alpha-amino acid + H(+). An aminoacyl-tRNA editing enzyme that deacylates mischarged D-aminoacyl-tRNAs. Also deacylates mischarged glycyl-tRNA(Ala), protecting cells against glycine mischarging by AlaRS. Acts via tRNA-based rather than protein-based catalysis; rejects L-amino acids rather than detecting D-amino acids in the active site. By recycling D-aminoacyl-tRNA to D-amino acids and free tRNA molecules, this enzyme counteracts the toxicity associated with the formation of D-aminoacyl-tRNA entities in vivo and helps enforce protein L-homochirality. This is D-aminoacyl-tRNA deacylase from Clostridium kluyveri (strain ATCC 8527 / DSM 555 / NBRC 12016 / NCIMB 10680 / K1).